The following is a 267-amino-acid chain: Protein BMH1 (267 aa).

Serine 2 carries the post-translational modification N-acetylserine. Lysine 76 participates in a covalent cross-link: Glycyl lysine isopeptide (Lys-Gly) (interchain with G-Cter in ubiquitin). Serine 89 carries the post-translational modification Phosphoserine. The tract at residues 236–267 is disordered; that stretch reads DMSESGQAEDQQQQQQHQQQQPPAAAEGEAPK. Residues 243–267 show a composition bias toward low complexity; it reads AEDQQQQQQHQQQQPPAAAEGEAPK.

It belongs to the 14-3-3 family. Homodimer. Interacts with NTH1 (via N-terminus when phosphorylated by PKA); the interaction is direct and activates NTH1. Interacts with FIN1.

Involved in growth regulation. The sequence is that of Protein BMH1 (BMH1) from Saccharomyces cerevisiae (strain ATCC 204508 / S288c) (Baker's yeast).